A 247-amino-acid polypeptide reads, in one-letter code: MPKVVSRSIVCSDTKDQEEYNEEKPLNIYYCLCNKMALILDCTLEQLPLREVDNARVINANDHANKLTHNPTPRMVYIKRKSRGNGIEKQYRYKCRSCSLPLYYRHSPDSHVTFVMSNALIRNKGESPLTQLLNSEIKGSFKAPAAKPATSAGPDDSGIVDASGKKVVVTRHTKNMGKFSSVTVSTIDEEEDEIEAREIADSYANNARIIEKQLQRKGGKLSDVGIKTKTEDAPPPQKKQRGTLLER.

Phosphoserine is present on S127. Positions 195–216 (EAREIADSYANNARIIEKQLQR) form a coiled coil. A disordered region spans residues 215–247 (QRKGGKLSDVGIKTKTEDAPPPQKKQRGTLLER).

This sequence belongs to the STEEP1 family.

Its function is as follows. Molecular adapter that stimulates membrane curvature formation and subsequent endoplasmic reticulum exit site (ERES) establishment by recruiting PI3K complex I, leading to COPII vesicle-mediated transport. The protein is STING ER exit protein of Drosophila melanogaster (Fruit fly).